The sequence spans 303 residues: Probable 5-dehydro-4-deoxyglucarate dehydratase (303 aa).

It belongs to the DapA family.

The catalysed reaction is 5-dehydro-4-deoxy-D-glucarate + H(+) = 2,5-dioxopentanoate + CO2 + H2O. It participates in carbohydrate acid metabolism; D-glucarate degradation; 2,5-dioxopentanoate from D-glucarate: step 2/2. In Pseudomonas putida (strain W619), this protein is Probable 5-dehydro-4-deoxyglucarate dehydratase.